A 465-amino-acid chain; its full sequence is 3-isopropylmalate dehydratase large subunit (465 aa).

[4Fe-4S] cluster-binding residues include Cys-347, Cys-407, and Cys-410. The segment at 417 to 443 (TLKPGERSASTSNRNFEGRQGKGGRTH) is disordered.

The protein belongs to the aconitase/IPM isomerase family. LeuC type 1 subfamily. As to quaternary structure, heterodimer of LeuC and LeuD. The cofactor is [4Fe-4S] cluster.

The catalysed reaction is (2R,3S)-3-isopropylmalate = (2S)-2-isopropylmalate. Its pathway is amino-acid biosynthesis; L-leucine biosynthesis; L-leucine from 3-methyl-2-oxobutanoate: step 2/4. In terms of biological role, catalyzes the isomerization between 2-isopropylmalate and 3-isopropylmalate, via the formation of 2-isopropylmaleate. This Thermobifida fusca (strain YX) protein is 3-isopropylmalate dehydratase large subunit.